The chain runs to 93 residues: MICAVYKSLRKAESYLFVEKRNDFERVPEALMAMFGEPKLVMMLPIEKRDHLGFADIKKVRSELKEKGFYLQLPPPVVNLLEQHKKEIGFNPD.

In terms of domain architecture, YcgL spans 1-85 (MICAVYKSLR…PVVNLLEQHK (85 aa)).

The protein is YcgL domain-containing protein Spea_2443 of Shewanella pealeana (strain ATCC 700345 / ANG-SQ1).